The chain runs to 191 residues: Protein GrpE (191 aa).

Basic and acidic residues predominate over residues 1 to 15 (MGKEEKNNIEDKALD). The interval 1-35 (MGKEEKNNIEDKALDNEQEMDQESTSKAVEELSIE) is disordered.

Belongs to the GrpE family. In terms of assembly, homodimer.

It is found in the cytoplasm. Participates actively in the response to hyperosmotic and heat shock by preventing the aggregation of stress-denatured proteins, in association with DnaK and GrpE. It is the nucleotide exchange factor for DnaK and may function as a thermosensor. Unfolded proteins bind initially to DnaJ; upon interaction with the DnaJ-bound protein, DnaK hydrolyzes its bound ATP, resulting in the formation of a stable complex. GrpE releases ADP from DnaK; ATP binding to DnaK triggers the release of the substrate protein, thus completing the reaction cycle. Several rounds of ATP-dependent interactions between DnaJ, DnaK and GrpE are required for fully efficient folding. This Francisella philomiragia subsp. philomiragia (strain ATCC 25017 / CCUG 19701 / FSC 153 / O#319-036) protein is Protein GrpE.